The primary structure comprises 214 residues: Endothelial cell-specific chemotaxis regulator (214 aa).

An N-terminal signal peptide occupies residues 1-18; sequence MRLGSAILGLLLLQGYSS. Residues 19-130 lie on the Extracellular side of the membrane; sequence QPTTTQTSQE…PTPTSESVLT (112 aa). The tract at residues 23-107 is disordered; that stretch reads TQTSQEILQK…DATPSPETTS (85 aa). The span at 28-57 shows a compositional bias: polar residues; sequence EILQKSSQVSLVSNQPVTPRSSTMDKQSLS. Residues 80–90 show a composition bias toward low complexity; the sequence is RSSSSSSSSSS. Residues 131 to 151 form a helical membrane-spanning segment; the sequence is VAAFGVISFIVILVVVVIILV. Residues 152–214 lie on the Cytoplasmic side of the membrane; sequence SVVSLRFKCR…KGSMSAEKIL (63 aa). Residues 163–184 form a disordered region; that stretch reads NKESEDPQKPGSSGLSESCSTA. Polar residues predominate over residues 172 to 184; sequence PGSSGLSESCSTA. Ser204 and Ser207 each carry phosphoserine.

It belongs to the ECSCR family. Interacts with FLNA. Interacts with the 20S proteasome subunit PSMA7. In terms of processing, may be heavily O-glycosylated. In terms of tissue distribution, expressed in all tissues examined, highest expression was observed in lung and spleen endothelial cells.

The protein localises to the cell membrane. Its subcellular location is the cytoplasm. Its function is as follows. Regulates endothelial chemotaxis and tube formation. Has a role in angiogenesis and apoptosis via modulation of the actin cytoskeleton and facilitation of proteasomal degradation of the apoptosis inhibitors BIRC3/IAP1 and BIRC2/IAP2. The chain is Endothelial cell-specific chemotaxis regulator (Ecscr) from Mus musculus (Mouse).